Reading from the N-terminus, the 90-residue chain is Large ribosomal subunit protein bL27 (90 aa).

Residues 1 to 22 are disordered; the sequence is MAHKKAGGSTRNGRDSNPKMLG.

It belongs to the bacterial ribosomal protein bL27 family.

The polypeptide is Large ribosomal subunit protein bL27 (Coxiella burnetii (strain CbuK_Q154) (Coxiella burnetii (strain Q154))).